We begin with the raw amino-acid sequence, 449 residues long: SUPPRESSOR OF GAMMA RESPONSE 1 (449 aa).

Residues 58-211 form the NAC domain; that stretch reads LPRGVKFDPS…DYVVSKIFYQ (154 aa). The DNA-binding element occupies 167–217; it reads RGCKKIMVLYGGKAVKTNWVMHQYHLGIEEDEKEGDYVVSKIFYQQPQQLV. Residues 324–336 are compositionally biased toward basic and acidic residues; the sequence is DDKEEQEKDRDNE. Residues 324 to 348 form a disordered region; that stretch reads DDKEEQEKDRDNENQGEEDPTWFDS.

Post-translationally, phosphorylated in a DNA stress-independent manner. Hyperphosphorylated on SQ motifs upon double-strand breaks, H(2)O(2) or zeocin treatments. Hyperphosphorylation is required for SOG1 function, and unlike constitutive phosphorylation, is ATM dependent. Expressed in shoot and root apical meristems, in lateral root primordia, in the vasculature of young leaves and in the root stele.

It is found in the nucleus. In terms of biological role, transcription factor regulating the transcriptional activation response to gamma irradiation. Required for stem-cell death induced by UVB or by gamma irradiation. Not required for ATM activation, but participates in pathways governed by both ATM and ATR sensor kinases. Involved in DNA damage response (DDR) system that regulates cell cycle arrest. Functional homolog of animal p53. Regulates SMR5 and SMR7 transcription. Regulates DNA repair and cytokinin signaling separately and plays a key role in controlling lateral root formation under genotoxic stress. This Arabidopsis thaliana (Mouse-ear cress) protein is SUPPRESSOR OF GAMMA RESPONSE 1.